A 160-amino-acid polypeptide reads, in one-letter code: Transcription elongation factor GreA (160 aa).

Residues 1–72 (MAEKTYPMTL…QISSLETKIR (72 aa)) are a coiled coil.

It belongs to the GreA/GreB family.

Functionally, necessary for efficient RNA polymerase transcription elongation past template-encoded arresting sites. The arresting sites in DNA have the property of trapping a certain fraction of elongating RNA polymerases that pass through, resulting in locked ternary complexes. Cleavage of the nascent transcript by cleavage factors such as GreA or GreB allows the resumption of elongation from the new 3'terminus. GreA releases sequences of 2 to 3 nucleotides. This chain is Transcription elongation factor GreA, found in Streptococcus gordonii (strain Challis / ATCC 35105 / BCRC 15272 / CH1 / DL1 / V288).